Here is a 422-residue protein sequence, read N- to C-terminus: UDP-N-acetylglucosamine 1-carboxyvinyltransferase (422 aa).

22–23 serves as a coordination point for phosphoenolpyruvate; sequence KN. Arginine 93 lines the UDP-N-acetyl-alpha-D-glucosamine pocket. Cysteine 117 acts as the Proton donor in catalysis. At cysteine 117 the chain carries 2-(S-cysteinyl)pyruvic acid O-phosphothioketal. Residues 122-126, aspartate 305, and isoleucine 327 contribute to the UDP-N-acetyl-alpha-D-glucosamine site; that span reads RPVDQ.

Belongs to the EPSP synthase family. MurA subfamily.

Its subcellular location is the cytoplasm. The enzyme catalyses phosphoenolpyruvate + UDP-N-acetyl-alpha-D-glucosamine = UDP-N-acetyl-3-O-(1-carboxyvinyl)-alpha-D-glucosamine + phosphate. It participates in cell wall biogenesis; peptidoglycan biosynthesis. In terms of biological role, cell wall formation. Adds enolpyruvyl to UDP-N-acetylglucosamine. The polypeptide is UDP-N-acetylglucosamine 1-carboxyvinyltransferase (Bordetella parapertussis (strain 12822 / ATCC BAA-587 / NCTC 13253)).